The following is a 371-amino-acid chain: Glutamate 5-kinase (371 aa).

ATP is bound at residue Lys14. Substrate contacts are provided by Ser54, Asp141, and Asn153. Residue 173-174 coordinates ATP; sequence TD. Positions 280 to 357 constitute a PUA domain; that stretch reads AGDLILDDGA…TQIEKLLGYI (78 aa).

This sequence belongs to the glutamate 5-kinase family.

Its subcellular location is the cytoplasm. The enzyme catalyses L-glutamate + ATP = L-glutamyl 5-phosphate + ADP. It functions in the pathway amino-acid biosynthesis; L-proline biosynthesis; L-glutamate 5-semialdehyde from L-glutamate: step 1/2. Functionally, catalyzes the transfer of a phosphate group to glutamate to form L-glutamate 5-phosphate. The sequence is that of Glutamate 5-kinase from Aromatoleum aromaticum (strain DSM 19018 / LMG 30748 / EbN1) (Azoarcus sp. (strain EbN1)).